The primary structure comprises 238 residues: Large ribosomal subunit protein uL2 (238 aa).

Residues His198–Ala238 form a disordered region. Polar residues predominate over residues Gln206–Arg216. Over residues Lys223–Ala238 the composition is skewed to basic residues.

This sequence belongs to the universal ribosomal protein uL2 family. Part of the 50S ribosomal subunit. Forms a bridge to the 30S subunit in the 70S ribosome.

One of the primary rRNA binding proteins. Required for association of the 30S and 50S subunits to form the 70S ribosome, for tRNA binding and peptide bond formation. It has been suggested to have peptidyltransferase activity; this is somewhat controversial. Makes several contacts with the 16S rRNA in the 70S ribosome. The sequence is that of Large ribosomal subunit protein uL2 from Sulfolobus acidocaldarius (strain ATCC 33909 / DSM 639 / JCM 8929 / NBRC 15157 / NCIMB 11770).